Here is a 204-residue protein sequence, read N- to C-terminus: Phosphopantothenoylcysteine decarboxylase (204 aa).

FMN is bound by residues threonine 53 and 104 to 107; that span reads DANT. Residue asparagine 140 coordinates substrate. Residue cysteine 173 is the Proton donor of the active site.

Belongs to the HFCD (homooligomeric flavin containing Cys decarboxylase) superfamily. Homotrimer. FMN serves as cofactor.

It carries out the reaction N-[(R)-4-phosphopantothenoyl]-L-cysteine + H(+) = (R)-4'-phosphopantetheine + CO2. Its pathway is cofactor biosynthesis; coenzyme A biosynthesis; CoA from (R)-pantothenate: step 3/5. Catalyzes the decarboxylation of the cysteine moiety of 4-phosphopantothenoylcysteine to form 4'-phosphopantotheine and this reaction forms part of the biosynthesis of coenzyme A. The chain is Phosphopantothenoylcysteine decarboxylase (Ppcdc) from Mus musculus (Mouse).